A 278-amino-acid chain; its full sequence is Indole-3-glycerol phosphate synthase (278 aa).

Belongs to the TrpC family.

The catalysed reaction is 1-(2-carboxyphenylamino)-1-deoxy-D-ribulose 5-phosphate + H(+) = (1S,2R)-1-C-(indol-3-yl)glycerol 3-phosphate + CO2 + H2O. It functions in the pathway amino-acid biosynthesis; L-tryptophan biosynthesis; L-tryptophan from chorismate: step 4/5. In Pseudomonas aeruginosa (strain UCBPP-PA14), this protein is Indole-3-glycerol phosphate synthase.